Reading from the N-terminus, the 549-residue chain is ATP synthase subunit alpha (549 aa).

An ATP-binding site is contributed by 172–179 (GDRKTGKT). The disordered stretch occupies residues 513 to 549 (SSTGESVVPDEHVEAMDEEDLGKESVKVKKPAPQKKK). Residues 540-549 (VKKPAPQKKK) are compositionally biased toward basic residues.

This sequence belongs to the ATPase alpha/beta chains family. F-type ATPases have 2 components, CF(1) - the catalytic core - and CF(0) - the membrane proton channel. CF(1) has five subunits: alpha(3), beta(3), gamma(1), delta(1), epsilon(1). CF(0) has three main subunits: a(1), b(2) and c(9-12). The alpha and beta chains form an alternating ring which encloses part of the gamma chain. CF(1) is attached to CF(0) by a central stalk formed by the gamma and epsilon chains, while a peripheral stalk is formed by the delta and b chains.

The protein localises to the cell membrane. The enzyme catalyses ATP + H2O + 4 H(+)(in) = ADP + phosphate + 5 H(+)(out). Its function is as follows. Produces ATP from ADP in the presence of a proton gradient across the membrane. The alpha chain is a regulatory subunit. The protein is ATP synthase subunit alpha of Mycobacterium ulcerans (strain Agy99).